A 125-amino-acid polypeptide reads, in one-letter code: Calcitonin receptor-stimulating peptide 3 (125 aa).

The first 25 residues, 1–25, serve as a signal peptide directing secretion; that stretch reads MGFWKFPPFLILSILVLYQAGMLHA. Residues 26 to 79 constitute a propeptide that is removed on maturation; the sequence is APFRMALGSSFDSATLTEEEMSLLLVAMVKDYVQMKATVLEQETEDFSITTQER. An intrachain disulfide couples Cys81 to Cys86. Leu116 bears the Leucine amide mark. The propeptide occupies 122–125; sequence QPQA.

The protein belongs to the calcitonin family. Mainly expressed in the thyroid gland and CNS. Found in the nerve cells of cerebrum, hippocampus, hypothalamus, pons/midbrain and thalamus.

The protein resides in the secreted. The protein is Calcitonin receptor-stimulating peptide 3 (CRSP3) of Sus scrofa (Pig).